Consider the following 219-residue polypeptide: Ribose-5-phosphate isomerase A (219 aa).

Residues 28-31 (SGST), 81-84 (DGAD), and 94-97 (KGGG) each bind substrate. Residue E103 is the Proton acceptor of the active site. K121 contacts substrate.

The protein belongs to the ribose 5-phosphate isomerase family. As to quaternary structure, homodimer.

The catalysed reaction is aldehydo-D-ribose 5-phosphate = D-ribulose 5-phosphate. Its pathway is carbohydrate degradation; pentose phosphate pathway; D-ribose 5-phosphate from D-ribulose 5-phosphate (non-oxidative stage): step 1/1. Functionally, catalyzes the reversible conversion of ribose-5-phosphate to ribulose 5-phosphate. The protein is Ribose-5-phosphate isomerase A of Actinobacillus pleuropneumoniae serotype 3 (strain JL03).